The primary structure comprises 257 residues: Snake venom serine protease KN10 (257 aa).

Positions 1 to 18 (MVLIRVLANLLILQLSYA) are cleaved as a signal peptide. Residues 19-24 (QKSSEL) constitute a propeptide that is removed on maturation. In terms of domain architecture, Peptidase S1 spans 25 to 248 (VVGGDECNIN…HLDWIKSIIA (224 aa)). 5 disulfides stabilise this stretch: C31–C162, C49–C65, C141–C209, C173–C188, and C199–C224. Catalysis depends on H64, which acts as the Charge relay system. N102 carries an N-linked (GlcNAc...) asparagine glycan. D109 acts as the Charge relay system in catalysis. N-linked (GlcNAc...) asparagine glycans are attached at residues N120 and N121. The Charge relay system role is filled by S203.

This sequence belongs to the peptidase S1 family. Snake venom subfamily. Monomer. Expressed by the venom gland.

The protein localises to the secreted. Functionally, snake venom serine protease that may act in the hemostasis system of the prey. This Trimeresurus stejnegeri (Chinese green tree viper) protein is Snake venom serine protease KN10.